Reading from the N-terminus, the 510-residue chain is D-allose import ATP-binding protein AlsA (510 aa).

2 consecutive ABC transporter domains span residues 6 to 245 and 260 to 509; these read ISMA…VGRE and LAHE…ALPQ. Position 38 to 45 (38 to 45) interacts with ATP; the sequence is GENGAGKS.

The protein belongs to the ABC transporter superfamily. D-allose importer (TC 3.A.1.2.6) family. In terms of assembly, the complex is composed of two ATP-binding proteins (AlsA), two transmembrane proteins (AlsC) and a solute-binding protein (AlsB).

The protein resides in the cell inner membrane. The catalysed reaction is D-allose(out) + ATP + H2O = D-allose(in) + ADP + phosphate + H(+). Its function is as follows. Part of the ABC transporter complex AlsBAC involved in D-allose import. Probably responsible for energy coupling to the transport system. The protein is D-allose import ATP-binding protein AlsA (alsA) of Escherichia coli (strain K12).